A 221-amino-acid chain; its full sequence is MPGTGKMKHVSLTLQVENDLKHQLSIGALKPGARLITKNLAEQLGMSITPVREALLRLVSVNALSVAPAQAFTVPEVGKRQLDEINRIRYELELMAVALAVENLTPQDLAELQELLEKLQQAQEKGDMEQIINVNRLFRLAIYHRSNMPILCEMIEQLWVRMGPGLHYLYEAINPAELREHIENYHLLLAALKAKDKEGCRHCLAEIMQQNIAILYQQYNR.

The 68-residue stretch at 10-77 (VSLTLQVEND…PAQAFTVPEV (68 aa)) folds into the HTH gntR-type domain. The segment at residues 37 to 56 (TKNLAEQLGMSITPVREALL) is a DNA-binding region (H-T-H motif).

Functionally, important for biofilm formation. Represses expression of McbA by binding to its promoter region, which prevents colanic acid overproduction and mucoidy. In Escherichia coli (strain K12), this protein is HTH-type transcriptional regulator McbR (mcbR).